A 296-amino-acid polypeptide reads, in one-letter code: Probable alpha-L-glutamate ligase (296 aa).

The ATP-grasp domain maps to 104–287 (LQLLARQGID…IATLMITFIE (184 aa)). ATP contacts are provided by residues Lys141, 178 to 179 (EF), Asp187, and 211 to 213 (RSN). Mg(2+)-binding residues include Asp248, Glu260, and Asn262. Residues Asp248, Glu260, and Asn262 each contribute to the Mn(2+) site.

The protein belongs to the RimK family. Mg(2+) serves as cofactor. It depends on Mn(2+) as a cofactor.

The chain is Probable alpha-L-glutamate ligase from Sodalis glossinidius (strain morsitans).